The primary structure comprises 279 residues: 3-methyl-2-oxobutanoate hydroxymethyltransferase (279 aa).

The Mg(2+) site is built by Asp-43 and Asp-82. Residues 43–44 (DS), Asp-82, and Lys-112 contribute to the 3-methyl-2-oxobutanoate site. Glu-114 lines the Mg(2+) pocket. The Proton acceptor role is filled by Glu-181.

This sequence belongs to the PanB family. Homodecamer; pentamer of dimers. Mg(2+) serves as cofactor.

The protein localises to the cytoplasm. The catalysed reaction is 3-methyl-2-oxobutanoate + (6R)-5,10-methylene-5,6,7,8-tetrahydrofolate + H2O = 2-dehydropantoate + (6S)-5,6,7,8-tetrahydrofolate. Its pathway is cofactor biosynthesis; (R)-pantothenate biosynthesis; (R)-pantoate from 3-methyl-2-oxobutanoate: step 1/2. Functionally, catalyzes the reversible reaction in which hydroxymethyl group from 5,10-methylenetetrahydrofolate is transferred onto alpha-ketoisovalerate to form ketopantoate. The sequence is that of 3-methyl-2-oxobutanoate hydroxymethyltransferase from Geobacillus kaustophilus (strain HTA426).